Here is a 459-residue protein sequence, read N- to C-terminus: Ribulose bisphosphate carboxylase large chain (459 aa).

Position 4 is an N6,N6,N6-trimethyllysine (Lys-4). Substrate-binding residues include Asn-113 and Thr-163. Catalysis depends on Lys-165, which acts as the Proton acceptor. Position 167 (Lys-167) interacts with substrate. Residues Lys-191, Asp-193, and Glu-194 each coordinate Mg(2+). Lys-191 bears the N6-carboxylysine mark. His-284 serves as the catalytic Proton acceptor. Substrate contacts are provided by Arg-285, His-317, and Ser-369.

It belongs to the RuBisCO large chain family. Type I subfamily. Heterohexadecamer of 8 large chains and 8 small chains; disulfide-linked. The disulfide link is formed within the large subunit homodimers. The cofactor is Mg(2+). The disulfide bond which can form in the large chain dimeric partners within the hexadecamer appears to be associated with oxidative stress and protein turnover.

The protein localises to the plastid. It is found in the chloroplast. It carries out the reaction 2 (2R)-3-phosphoglycerate + 2 H(+) = D-ribulose 1,5-bisphosphate + CO2 + H2O. The enzyme catalyses D-ribulose 1,5-bisphosphate + O2 = 2-phosphoglycolate + (2R)-3-phosphoglycerate + 2 H(+). In terms of biological role, ruBisCO catalyzes two reactions: the carboxylation of D-ribulose 1,5-bisphosphate, the primary event in carbon dioxide fixation, as well as the oxidative fragmentation of the pentose substrate in the photorespiration process. Both reactions occur simultaneously and in competition at the same active site. This Geum quellyon (Chilean avens) protein is Ribulose bisphosphate carboxylase large chain.